We begin with the raw amino-acid sequence, 132 residues long: Matrix protein (132 aa).

It localises to the virion membrane. Its function is as follows. Envelope protein that may play a role in host-cell attachment and viral genome entry. The protein is Matrix protein of Halorubrum pleomorphic virus 1 (HRPV-1).